Consider the following 487-residue polypeptide: Betaine aldehyde dehydrogenase (487 aa).

Positions 27 and 93 each coordinate K(+). Residue 149-151 (GAW) participates in NAD(+) binding. Lysine 161 functions as the Charge relay system in the catalytic mechanism. NAD(+) is bound by residues 175–178 (KPSE) and 228–231 (SVPT). Leucine 243 serves as a coordination point for K(+). Residue glutamate 249 is the Proton acceptor of the active site. Residues glycine 251, cysteine 283, and glutamate 384 each contribute to the NAD(+) site. Catalysis depends on cysteine 283, which acts as the Nucleophile. Cysteine 283 carries the cysteine sulfenic acid (-SOH) modification. The K(+) site is built by lysine 454 and glycine 457. The active-site Charge relay system is glutamate 461.

This sequence belongs to the aldehyde dehydrogenase family. As to quaternary structure, dimer of dimers. K(+) serves as cofactor.

It catalyses the reaction betaine aldehyde + NAD(+) + H2O = glycine betaine + NADH + 2 H(+). It participates in amine and polyamine biosynthesis; betaine biosynthesis via choline pathway; betaine from betaine aldehyde: step 1/1. In terms of biological role, involved in the biosynthesis of the osmoprotectant glycine betaine. Catalyzes the irreversible oxidation of betaine aldehyde to the corresponding acid. In Brucella suis (strain ATCC 23445 / NCTC 10510), this protein is Betaine aldehyde dehydrogenase.